The primary structure comprises 362 residues: UDP-N-acetylglucosamine--N-acetylmuramyl-(pentapeptide) pyrophosphoryl-undecaprenol N-acetylglucosamine transferase (362 aa).

UDP-N-acetyl-alpha-D-glucosamine contacts are provided by residues 14–16, asparagine 122, arginine 163, serine 190, and glutamine 285; that span reads TGG.

This sequence belongs to the glycosyltransferase 28 family. MurG subfamily.

Its subcellular location is the cell inner membrane. It catalyses the reaction di-trans,octa-cis-undecaprenyl diphospho-N-acetyl-alpha-D-muramoyl-L-alanyl-D-glutamyl-meso-2,6-diaminopimeloyl-D-alanyl-D-alanine + UDP-N-acetyl-alpha-D-glucosamine = di-trans,octa-cis-undecaprenyl diphospho-[N-acetyl-alpha-D-glucosaminyl-(1-&gt;4)]-N-acetyl-alpha-D-muramoyl-L-alanyl-D-glutamyl-meso-2,6-diaminopimeloyl-D-alanyl-D-alanine + UDP + H(+). The protein operates within cell wall biogenesis; peptidoglycan biosynthesis. Its function is as follows. Cell wall formation. Catalyzes the transfer of a GlcNAc subunit on undecaprenyl-pyrophosphoryl-MurNAc-pentapeptide (lipid intermediate I) to form undecaprenyl-pyrophosphoryl-MurNAc-(pentapeptide)GlcNAc (lipid intermediate II). The chain is UDP-N-acetylglucosamine--N-acetylmuramyl-(pentapeptide) pyrophosphoryl-undecaprenol N-acetylglucosamine transferase from Prochlorococcus marinus (strain MIT 9215).